Here is a 109-residue protein sequence, read N- to C-terminus: Thiosulfate sulfurtransferase GlpE (109 aa).

Residues 16 to 104 (RNAGAVIVDI…WRHTYPSDVE (89 aa)) form the Rhodanese domain. Catalysis depends on C64, which acts as the Cysteine persulfide intermediate.

The protein belongs to the GlpE family.

It is found in the cytoplasm. The enzyme catalyses thiosulfate + hydrogen cyanide = thiocyanate + sulfite + 2 H(+). It carries out the reaction thiosulfate + [thioredoxin]-dithiol = [thioredoxin]-disulfide + hydrogen sulfide + sulfite + 2 H(+). In terms of biological role, transferase that catalyzes the transfer of sulfur from thiosulfate to thiophilic acceptors such as cyanide or dithiols. May function in a CysM-independent thiosulfate assimilation pathway by catalyzing the conversion of thiosulfate to sulfite, which can then be used for L-cysteine biosynthesis. This chain is Thiosulfate sulfurtransferase GlpE, found in Stutzerimonas stutzeri (strain A1501) (Pseudomonas stutzeri).